Here is a 500-residue protein sequence, read N- to C-terminus: MSRLERLTSLNVVAGSDLRRTSIIGTIGPKTNNPETLVALRKAGLNIVRMNFSHGSYEYHKSVIDNARKSEELYPGRPLAIALDTKGPEIRTGTTTNDVDYPIPPNHEMIFTTDDKYAKACDDKIMYVDYKNITKVISAGRIIYVDDGVLSFQVLEVVDDKTLKVKALNAGKICSHKGVNLPGTDVDLPALSEKDKEDLRFGVKNGVHMVFASFIRTANDVLTIREVLGEQGKDVKIIVKIENQQGVNNFDEILKVTDGVMVARGDLGIEIPAPEVLAVQKKLIAKSNLAGKPVICATQMLESMTYNPRPTRAEVSDVGNAILDGADCVMLSGETAKGNYPINAVTTMAETAVIAEQAIAYLPNYDDMRNCTPKPTSTTETVAASAVAAVFEQKAKAIIVLSTSGTTPRLVSKYRPNCPIILVTRCPRAARFSHLYRGVFPFVFEKEPVSDWTDDVEARINFGIEKAKEFGILKKGDTYVSIQGFKAGAGHSNTLQVSTV.

Serine 2 is subject to N-acetylserine. Phosphoserine occurs at positions 9 and 16. A Phosphothreonine modification is found at threonine 31. Substrate is bound at residue arginine 49. K(+) is bound by residues asparagine 51 and serine 53. 51–54 (NFSH) lines the ATP pocket. Serine 70 is subject to Phosphoserine. Aspartate 84 and threonine 85 together coordinate K(+). Arginine 91 serves as a coordination point for ATP. Glycyl lysine isopeptide (Lys-Gly) (interchain with G-Cter in URM1) cross-links involve residues lysine 119, lysine 124, lysine 161, lysine 164, and lysine 166. Lysine 177 is a binding site for ATP. Threonine 184 is modified (phosphothreonine). A Glycyl lysine isopeptide (Lys-Gly) (interchain with G-Cter in ubiquitin) cross-link involves residue lysine 204. Serine 213 carries the post-translational modification Phosphoserine. Residue lysine 240 participates in substrate binding. Glutamate 242 serves as a coordination point for Mn(2+). Lysine 255 is covalently cross-linked (Glycyl lysine isopeptide (Lys-Gly) (interchain with G-Cter in ubiquitin)). Positions 265 and 266 each coordinate substrate. Aspartate 266 lines the Mn(2+) pocket. Residue lysine 292 forms a Glycyl lysine isopeptide (Lys-Gly) (interchain with G-Cter in URM1) linkage. Residue threonine 298 participates in substrate binding. Phosphoserine is present on serine 316. Lysine 394 is covalently cross-linked (Glycyl lysine isopeptide (Lys-Gly) (interchain with G-Cter in URM1)). 402 to 407 (STSGTT) is a beta-D-fructose 1,6-bisphosphate binding site. Residue cysteine 418 is modified to Cysteine persulfide. Lysine 446 participates in a covalent cross-link: Glycyl lysine isopeptide (Lys-Gly) (interchain with G-Cter in ubiquitin); alternate. Residue lysine 446 forms a Glycyl lysine isopeptide (Lys-Gly) (interchain with G-Cter in URM1); alternate linkage. At serine 450 the chain carries Phosphoserine. Positions 452 and 459 each coordinate beta-D-fructose 1,6-bisphosphate. Threonine 478 carries the post-translational modification Phosphothreonine. Glycine 484 lines the beta-D-fructose 1,6-bisphosphate pocket.

The protein belongs to the pyruvate kinase family. As to quaternary structure, homotetramer. The cofactor is Mg(2+). It depends on K(+) as a cofactor. In terms of processing, conjugated to URM1, a ubiquitin-like protein, in response to oxidative stresses. The attachment of URM1 to lysine residues exclusively depends on the presence of a peroxidatic cysteine in the target protein, with low specificity for the particular residue, motif, or structural context at which urmylation can occur. The URM1-conjugation reaction is mechanistically and directly coupled to the process of cysteine persulfidation, transfering the sulfur atom of the URM1 thiocarboxyl group to redox-active cysteine residues in the target protein if it is exposed to oxidative conditions. Persulfidated on specific redox-active cysteine residues. Persulfidation (also called protein S-sulfhydration) may provide a molecular mechanism that enables cells to protect vulnerable cysteine residues from reactive oxygen species (ROS) under stress conditions.

It catalyses the reaction pyruvate + ATP = phosphoenolpyruvate + ADP + H(+). Its pathway is carbohydrate degradation; glycolysis; pyruvate from D-glyceraldehyde 3-phosphate: step 5/5. With respect to regulation, the activity is regulated by glucose levels. Activated by fructose-1,6-bisphosphate. In Saccharomyces cerevisiae (strain ATCC 204508 / S288c) (Baker's yeast), this protein is Pyruvate kinase 1 (CDC19).